Reading from the N-terminus, the 209-residue chain is Ribosomal RNA large subunit methyltransferase E (209 aa).

S-adenosyl-L-methionine is bound by residues G63, W65, D83, D99, and D124. K164 serves as the catalytic Proton acceptor.

This sequence belongs to the class I-like SAM-binding methyltransferase superfamily. RNA methyltransferase RlmE family.

The protein resides in the cytoplasm. The catalysed reaction is uridine(2552) in 23S rRNA + S-adenosyl-L-methionine = 2'-O-methyluridine(2552) in 23S rRNA + S-adenosyl-L-homocysteine + H(+). Its function is as follows. Specifically methylates the uridine in position 2552 of 23S rRNA at the 2'-O position of the ribose in the fully assembled 50S ribosomal subunit. The sequence is that of Ribosomal RNA large subunit methyltransferase E from Buchnera aphidicola subsp. Cinara cedri (strain Cc).